We begin with the raw amino-acid sequence, 274 residues long: (R)-stereoselective amidase (274 aa).

One can recognise a CN hydrolase domain in the interval 1-234; that stretch reads MKIELVQLAG…EVRHVVELDL (234 aa). Residue Glu40 is the Proton acceptor of the active site. Lys108 serves as the catalytic Proton donor. Cys140 serves as the catalytic Nucleophile.

In terms of assembly, monomer.

It carries out the reaction (R)-piperazine-2-carboxamide + H2O = (R)-piperazine-2-carboxylate + NH4(+). The enzyme catalyses beta-alaninamide + H2O = beta-alanine + NH4(+). With respect to regulation, completely inhibited by p-chloromercuribenzoate, N-ethylmaleimide, MnSO(4), MnCl(2), CoCl(2), NiCl(2), CuSO(4), CuCl(2), ZnSO(4), ZnCl(2), AgNO(3), CdCl(2), HgCl(2) and PbCl(2). Partially inhibited by FeCl(3) and Fe(NH(4))(2)(SO(4))(2). Slightly enhanced by dithiothreitol. Unaffected by LiBr, H(2)BO(3), NaCl, MgSO(4), MgCl(2), AlCl(3), KCl, CaCl(2), CrCl(3), RbCl, Na(2)MoO(4), (NH(4))(6)Mo(7)O(24), CsCl and BaCl(2). Unaffected by the chelating agents o-phenanthroline, 8-hydroxyquinoline, enthylenediaminetetraacetic acid and alpha,alpha'-dipyridyl. Not inhibited by the carbonyl reagents hydroxylamine, phenylhydrazine, hydrazine, D,L-penicillamine and D-cycloserine. Not affected by the serine protease inhibitor phenylmethanesulfonyl fluoride, the serine/cysteine protease inhibitor leupeptine or the aspartic protease inhibitor pepstatin. In terms of biological role, hydrolyzes (R)-piperazine-2-carboxamide and (R)-piperazine-2-tert-butylcarboxamide with strict R-stereoselectivity. Also active towards beta-alaninamide, piperidine-3-carboxmide, D-glutaminamide and slightly active towards L-glutaminamide and piperidine-4-carboxamide. This is (R)-stereoselective amidase from Pseudomonas sp.